The chain runs to 176 residues: Alkyl hydroperoxide reductase AhpD (176 aa).

Residue cysteine 131 is the Proton donor of the active site. An intrachain disulfide couples cysteine 131 to cysteine 134. Catalysis depends on cysteine 134, which acts as the Cysteine sulfenic acid (-SOH) intermediate.

The protein belongs to the AhpD family.

The enzyme catalyses N(6)-[(R)-dihydrolipoyl]-L-lysyl-[lipoyl-carrier protein] + a hydroperoxide = N(6)-[(R)-lipoyl]-L-lysyl-[lipoyl-carrier protein] + an alcohol + H2O. Its function is as follows. Antioxidant protein with alkyl hydroperoxidase activity. Required for the reduction of the AhpC active site cysteine residues and for the regeneration of the AhpC enzyme activity. The polypeptide is Alkyl hydroperoxide reductase AhpD (Methylobacterium sp. (strain 4-46)).